The chain runs to 163 residues: Large ribosomal subunit protein uL10 (163 aa).

This sequence belongs to the universal ribosomal protein uL10 family. In terms of assembly, part of the ribosomal stalk of the 50S ribosomal subunit. The N-terminus interacts with L11 and the large rRNA to form the base of the stalk. The C-terminus forms an elongated spine to which L12 dimers bind in a sequential fashion forming a multimeric L10(L12)X complex.

Functionally, forms part of the ribosomal stalk, playing a central role in the interaction of the ribosome with GTP-bound translation factors. The protein is Large ribosomal subunit protein uL10 of Blochmanniella pennsylvanica (strain BPEN).